The sequence spans 151 residues: Ubiquitin-conjugating enzyme E2 2 (151 aa).

Residues 4–150 form the UBC core domain; it reads AARRRLMRDF…VRETVEKSWE (147 aa). Cysteine 88 (glycyl thioester intermediate) is an active-site residue.

The protein belongs to the ubiquitin-conjugating enzyme family.

Its subcellular location is the cytoplasm. The protein localises to the nucleus. It carries out the reaction S-ubiquitinyl-[E1 ubiquitin-activating enzyme]-L-cysteine + [E2 ubiquitin-conjugating enzyme]-L-cysteine = [E1 ubiquitin-activating enzyme]-L-cysteine + S-ubiquitinyl-[E2 ubiquitin-conjugating enzyme]-L-cysteine.. The protein operates within protein modification; protein ubiquitination. Functionally, catalyzes the covalent attachment of ubiquitin to other proteins. Plays a role in transcription regulation by catalyzing the monoubiquitination of histone H2B to form H2BK123ub1. H2BK123ub1 gives a specific tag for epigenetic transcriptional activation and is also a prerequisite for H3K4me and H3K79me formation. Also involved in postreplication repair of UV-damaged DNA, in N-end rule-dependent protein degradation and in sporulation. This Fusarium solani (Filamentous fungus) protein is Ubiquitin-conjugating enzyme E2 2 (UBC2).